Here is a 354-residue protein sequence, read N- to C-terminus: Type II restriction enzyme BanI (354 aa).

As to quaternary structure, homodimer.

The enzyme catalyses Endonucleolytic cleavage of DNA to give specific double-stranded fragments with terminal 5'-phosphates.. In terms of biological role, a P subtype restriction enzyme that recognizes the double-stranded sequence 5'-GGYRCC-3' and cleaves after G-1. The chain is Type II restriction enzyme BanI (banIR) from Aneurinibacillus aneurinilyticus (Bacillus aneurinolyticus).